Reading from the N-terminus, the 426-residue chain is F-box protein At2g15640 (426 aa).

The region spanning 1–48 (MNPSTITNDLTVEILSRLPAKSVARFHCVSKQWGSIFGSPYFKELFLT) is the F-box domain.

This is F-box protein At2g15640 from Arabidopsis thaliana (Mouse-ear cress).